Reading from the N-terminus, the 637-residue chain is MTRTGPPINPISWDTKTIVPDDGSRIDSVACQDARPKGRIRRSMTACHTCRKLKTRCDVDPRGHSCRRCLSLRLDCELPETTERFQDNASTWSDATAVPSIEERLVSLERGMGEMIHLMRQIVKSSPSMPCSPTFQTRNHSIDGTSSSDSMSSSFYPLKPAQLIRDLQAECFGERAHFSDADILGDIVTQGIVDSKLSVKLIELFVEHFGHWVSINHSSSLQRSNTLLFNTACLLASRYMPGLPQHTVRDISLYVQHAVAKVLWKPPPMTSDMLQALTLLCLYSTSIHKEGLMDDWLLSGISINHALISFNFLNTLPGDNLSPDELLAQLRLWNTLCATQLHSALANGRTVNIQQQYINQCPRILEHAGATPEDGRIVAEIQLYRIALRLQHSQSRLQFAESEYEELERWRMEWAHLLTTNGDSTLNLNLWFCQLLLHRTAARLQPDSERLLPEICGTARLIITQFLQTRFTSAPALIDHVYFIVGYAALTLCDYTLTDPLINQVRGFLLHLAPGGDNLSYRIACIVGEVQRRYSEATAVVAAGSHSSSPVAEVKGAQMFGSSHHHRTGMELSQLMSSPEGLDSLVEGYNCLEQMMPGYAASQPAFEAPDLFHHSPTTGVTGGAMPIGLVPRALHDW.

The zn(2)-C6 fungal-type DNA-binding region spans cysteine 47–cysteine 76. The span at proline 127 to threonine 145 shows a compositional bias: polar residues. The tract at residues proline 127–serine 153 is disordered.

It belongs to the prtT family.

It is found in the nucleus. In terms of biological role, transcription factor required for protein utilization and degradation. Regulates transcription of major secreted proteases. This Penicillium rubens (strain ATCC 28089 / DSM 1075 / NRRL 1951 / Wisconsin 54-1255) (Penicillium chrysogenum) protein is Transcriptional activator of proteases prtT (prtT).